The chain runs to 173 residues: MNNKTEMGSSTSGNCSSVSTTGLANSGSESDLRQRDLIDERKRKRKQSNRESARRSRMRKQKHLDDLTAQVTHLRKENAQIVAGIAVTTQHYVTIEAENDILRAQVLELNHRLQSLNEIVDFVESSSSGFGMETGQGLFDGGLFDGVMNPMNLGFYNQPIMASASTAGDVFNC.

The disordered stretch occupies residues 1 to 65 (MNNKTEMGSS…SRMRKQKHLD (65 aa)). Positions 8 to 22 (GSSTSGNCSSVSTTG) are enriched in low complexity. Residues 30–41 (SDLRQRDLIDER) show a composition bias toward basic and acidic residues. The 64-residue stretch at 39–102 (DERKRKRKQS…VTIEAENDIL (64 aa)) folds into the bZIP domain. The basic motif stretch occupies residues 41–62 (RKRKRKQSNRESARRSRMRKQK). The interval 67–81 (LTAQVTHLRKENAQI) is leucine-zipper.

In terms of assembly, forms heterodimers with BZIP1, BZIP9, BZIP10, BZIP25 and BZIP63. In terms of tissue distribution, expressed in the micropylar endosperm and radicle tip in early germinating seeds.

It localises to the nucleus. Its function is as follows. Transcription factor that binds to the DNA G-box motif 5'-CACGTG-3' of MAN7 promoter. Involved in the positive regulation of seed germination through MAN7 gene activation. MAN7 is required for both, loosening of the micropylar endosperm, and rupture of the seed coat in germinating seeds. The chain is bZIP transcription factor 44 from Arabidopsis thaliana (Mouse-ear cress).